A 225-amino-acid polypeptide reads, in one-letter code: Transmembrane protein 40 (225 aa).

M1 is modified (N-acetylmethionine). Low complexity predominate over residues 1–14 (MEASGSSSQSQDSG). A disordered region spans residues 1-96 (MEASGSSSQS…RRDSLRGADH (96 aa)). The span at 15–29 (GVHRETEDHYQETEL) shows a compositional bias: basic and acidic residues. Basic residues predominate over residues 30–39 (HKHHGKARER). Residues 46–68 (SSSSSSSSSSSSSSSSSSSSSSD) are compositionally biased toward low complexity. The segment covering 78–87 (GPRKHRRRPR) has biased composition (basic residues). Residue S129 is modified to Phosphoserine. The next 2 helical transmembrane spans lie at 152-172 (FFHF…YHYY) and 179-199 (LGVG…FGLV).

The protein localises to the membrane. This chain is Transmembrane protein 40 (Tmem40), found in Mus musculus (Mouse).